The chain runs to 208 residues: FMN-dependent NADH:quinone oxidoreductase 4 (208 aa).

It belongs to the azoreductase type 1 family. In terms of assembly, homodimer. FMN serves as cofactor.

The enzyme catalyses 2 a quinone + NADH + H(+) = 2 a 1,4-benzosemiquinone + NAD(+). It carries out the reaction N,N-dimethyl-1,4-phenylenediamine + anthranilate + 2 NAD(+) = 2-(4-dimethylaminophenyl)diazenylbenzoate + 2 NADH + 2 H(+). Quinone reductase that provides resistance to thiol-specific stress caused by electrophilic quinones. In terms of biological role, also exhibits azoreductase activity. Catalyzes the reductive cleavage of the azo bond in aromatic azo compounds to the corresponding amines. The polypeptide is FMN-dependent NADH:quinone oxidoreductase 4 (Bacillus cereus (strain ATCC 10987 / NRS 248)).